Here is a 453-residue protein sequence, read N- to C-terminus: Allantoinase (453 aa).

Zn(2+) contacts are provided by histidine 59, histidine 61, lysine 146, histidine 186, histidine 242, and aspartate 315. N6-carboxylysine is present on lysine 146.

The protein belongs to the metallo-dependent hydrolases superfamily. Allantoinase family. In terms of assembly, homotetramer. Zn(2+) is required as a cofactor. Carboxylation allows a single lysine to coordinate two zinc ions.

It carries out the reaction (S)-allantoin + H2O = allantoate + H(+). Its pathway is nitrogen metabolism; (S)-allantoin degradation; allantoate from (S)-allantoin: step 1/1. In terms of biological role, catalyzes the conversion of allantoin (5-ureidohydantoin) to allantoic acid by hydrolytic cleavage of the five-member hydantoin ring. In Salmonella agona (strain SL483), this protein is Allantoinase.